A 180-amino-acid chain; its full sequence is Ribulose bisphosphate carboxylase small subunit, chloroplastic 3 (180 aa).

A chloroplast-targeting transit peptide spans 1–56 (MASSLMSNAITAVVGASGAQANMVAPFNGLKSIASFPVTRKSNDITSIASNGGRVQ).

It belongs to the RuBisCO small chain family. As to quaternary structure, heterohexadecamer of 8 large and 8 small subunits.

Its subcellular location is the plastid. It localises to the chloroplast. Functionally, ruBisCO catalyzes two reactions: the carboxylation of D-ribulose 1,5-bisphosphate, the primary event in carbon dioxide fixation, as well as the oxidative fragmentation of the pentose substrate. Both reactions occur simultaneously and in competition at the same active site. Although the small subunit is not catalytic it is essential for maximal activity. The chain is Ribulose bisphosphate carboxylase small subunit, chloroplastic 3 from Amaranthus hypochondriacus (Prince-of-Wales feather).